A 98-amino-acid polypeptide reads, in one-letter code: MKVYDVGRICVKTSGREAGLKCVIVDIIDDNFVLVTGPKSVSGVKRRRANIRHLEPLEYKISISKGASDEEVKAALEKAGLIEFMKEKVKPTVSTTFV.

This sequence belongs to the eukaryotic ribosomal protein eL14 family.

The chain is Large ribosomal subunit protein eL14 from Thermofilum pendens (strain DSM 2475 / Hrk 5).